The sequence spans 1710 residues: Phosphatidylinositol 4-phosphate 5-kinase (1710 aa).

The EF-hand domain maps to tyrosine 68 to glycine 98. 5 residues coordinate Ca(2+): aspartate 76, asparagine 78, aspartate 80, tyrosine 82, and glutamate 87. 3 disordered regions span residues asparagine 139–asparagine 255, lysine 427–valine 479, and glycine 895–asparagine 993. Positions asparagine 140 to asparagine 235 are enriched in low complexity. The span at lysine 236–lysine 248 shows a compositional bias: polar residues. Over residues lysine 427–lysine 444 the composition is skewed to basic residues. Positions serine 456–glutamine 468 are enriched in low complexity. The span at glutamate 902 to aspartate 973 shows a compositional bias: acidic residues. Positions glutamate 974–proline 987 are enriched in basic and acidic residues. In terms of domain architecture, PIPK spans glutamine 1334–methionine 1709.

The catalysed reaction is a 1,2-diacyl-sn-glycero-3-phospho-(1D-myo-inositol 4-phosphate) + ATP = a 1,2-diacyl-sn-glycero-3-phospho-(1D-myo-inositol-4,5-bisphosphate) + ADP + H(+). With respect to regulation, catalytic activity is increase by myristoylated ARF1. Phosphatidic acid has no effect on catalytic activity. Its function is as follows. Catalyzes the phosphorylation of phosphatidylinositol 4-phosphate (PtdIns(4)P/PI4P) to form phosphatidylinositol 4,5-bisphosphate (PtdIns(4,5)P2/PIP2), a lipid second messenger that regulates several cellular processes. This is Phosphatidylinositol 4-phosphate 5-kinase from Plasmodium falciparum (isolate 3D7).